A 600-amino-acid polypeptide reads, in one-letter code: Zinc metalloproteinase-disintegrin-like cobrin (600 aa).

The N-terminal stretch at 1–8 (MIQLSWSS) is a signal peptide. Residues 9-179 (IILESGNVND…DEPIKKTSLL (171 aa)) constitute a propeptide that is removed on maturation. One can recognise a Peptidase M12B domain in the interval 193–388 (KYIEFYMVVD…DRPQCILNKP (196 aa)). Ca(2+) is bound by residues E196 and D280. 3 disulfide bridges follow: C304–C383, C344–C367, and C346–C351. Zn(2+) is bound by residues H329, H333, and H339. C383, N386, I398, N401, F403, E405, E408, and D411 together coordinate Ca(2+). One can recognise a Disintegrin domain in the interval 396 to 482 (PPICGNYFVE…ECPTDVFQRN (87 aa)). Cystine bridges form between C399-C428, C410-C423, C412-C418, C422-C445, C436-C442, C441-C467, C454-C474, C461-C492, C486-C497, C504-C554, C519-C562, C532-C542, C549-C588, and C582-C593. N424 carries N-linked (GlcNAc...) asparagine glycosylation. Positions 460 to 462 (DCD) match the D/ECD-tripeptide motif. Ca(2+) is bound by residues D462, L463, E465, D477, and V478.

It belongs to the venom metalloproteinase (M12B) family. P-III subfamily. P-IIIa sub-subfamily. Monomer. The cofactor is Zn(2+). As to expression, expressed by the venom gland.

It is found in the secreted. In terms of biological role, snake venom zinc metalloproteinase that may cleave complement protein C3 into C3c-like (C3o). The chain is Zinc metalloproteinase-disintegrin-like cobrin from Naja kaouthia (Monocled cobra).